A 142-amino-acid polypeptide reads, in one-letter code: Hemoglobin subunit theta-1 (142 aa).

Residues 2–142 (ALSAEDRALV…VISALVSEYR (141 aa)) enclose the Globin domain. The heme b site is built by His-59 and His-88.

Belongs to the globin family.

In Homo sapiens (Human), this protein is Hemoglobin subunit theta-1 (HBQ1).